A 653-amino-acid chain; its full sequence is tRNA uridine 5-carboxymethylaminomethyl modification enzyme MnmG (653 aa).

Residues 18–23 (GAGHAG), Val-130, and Thr-195 contribute to the FAD site. Residue 287–301 (GPRYCPSIEDKVVRF) participates in NAD(+) binding. Residue Gln-384 participates in FAD binding. Residues 624–653 (SQTKSSASVDKRASSDNESSRPTSSASDSL) form a disordered region. The span at 632 to 642 (VDKRASSDNES) shows a compositional bias: basic and acidic residues. Over residues 643-653 (SRPTSSASDSL) the composition is skewed to polar residues.

It belongs to the MnmG family. As to quaternary structure, homodimer. Heterotetramer of two MnmE and two MnmG subunits. FAD serves as cofactor.

The protein localises to the cytoplasm. Its function is as follows. NAD-binding protein involved in the addition of a carboxymethylaminomethyl (cmnm) group at the wobble position (U34) of certain tRNAs, forming tRNA-cmnm(5)s(2)U34. In Rhodopirellula baltica (strain DSM 10527 / NCIMB 13988 / SH1), this protein is tRNA uridine 5-carboxymethylaminomethyl modification enzyme MnmG.